A 155-amino-acid chain; its full sequence is S-ribosylhomocysteine lyase (155 aa).

The Fe cation site is built by H58, H62, and C125.

This sequence belongs to the LuxS family. Homodimer. The cofactor is Fe cation.

The enzyme catalyses S-(5-deoxy-D-ribos-5-yl)-L-homocysteine = (S)-4,5-dihydroxypentane-2,3-dione + L-homocysteine. Its function is as follows. Involved in the synthesis of autoinducer 2 (AI-2) which is secreted by bacteria and is used to communicate both the cell density and the metabolic potential of the environment. The regulation of gene expression in response to changes in cell density is called quorum sensing. Catalyzes the transformation of S-ribosylhomocysteine (RHC) to homocysteine (HC) and 4,5-dihydroxy-2,3-pentadione (DPD). This chain is S-ribosylhomocysteine lyase, found in Helicobacter pylori (strain P12).